Here is a 230-residue protein sequence, read N- to C-terminus: Orotate phosphoribosyltransferase (230 aa).

5-phospho-alpha-D-ribose 1-diphosphate-binding positions include Arg107, Lys108, Lys111, His113, and 133–141 (EDLTTAGGS). Residue Thr137 coordinates orotate.

It belongs to the purine/pyrimidine phosphoribosyltransferase family. PyrE subfamily. Homodimer. It depends on Mg(2+) as a cofactor.

It carries out the reaction orotidine 5'-phosphate + diphosphate = orotate + 5-phospho-alpha-D-ribose 1-diphosphate. Its pathway is pyrimidine metabolism; UMP biosynthesis via de novo pathway; UMP from orotate: step 1/2. In terms of biological role, catalyzes the transfer of a ribosyl phosphate group from 5-phosphoribose 1-diphosphate to orotate, leading to the formation of orotidine monophosphate (OMP). The polypeptide is Orotate phosphoribosyltransferase (Allorhizobium ampelinum (strain ATCC BAA-846 / DSM 112012 / S4) (Agrobacterium vitis (strain S4))).